A 305-amino-acid chain; its full sequence is GTPase Era (305 aa).

The Era-type G domain maps to 11–181 (RSGFISFVGR…LDVITRLLPE (171 aa)). Positions 19–26 (GRPNTGKS) are G1. A GTP-binding site is contributed by 19 to 26 (GRPNTGKS). Positions 45–49 (ETTRH) are G2. The G3 stretch occupies residues 66–69 (DTPG). GTP is bound by residues 66 to 70 (DTPGL) and 130 to 133 (TKVD). The G4 stretch occupies residues 130–133 (TKVD). A G5 region spans residues 160-162 (VSA). The region spanning 212-291 (LKDELPHSVA…YLDLRIKVLK (80 aa)) is the KH type-2 domain.

The protein belongs to the TRAFAC class TrmE-Era-EngA-EngB-Septin-like GTPase superfamily. Era GTPase family. Monomer.

The protein localises to the cytoplasm. The protein resides in the cell membrane. Functionally, an essential GTPase that binds both GDP and GTP, with rapid nucleotide exchange. Plays a role in 16S rRNA processing and 30S ribosomal subunit biogenesis and possibly also in cell cycle regulation and energy metabolism. The sequence is that of GTPase Era from Corynebacterium diphtheriae (strain ATCC 700971 / NCTC 13129 / Biotype gravis).